A 117-amino-acid chain; its full sequence is Antimicrobial peptide AmAMP1 (117 aa).

A signal peptide spans 1–25 (MPSIRVLFVLLAVILLFMEVKMTSA). Residues 26 to 73 (ASIVKDVDEDETLENEDGEAMENSWPWHGVEDTSDYSDLSDLANSEKR) constitute a propeptide that is removed on maturation. 3 disulfides stabilise this stretch: Cys76-Cys115, Cys85-Cys108, and Cys94-Cys112.

Belongs to the coral AMP family.

It localises to the secreted. In terms of biological role, coral peptide that probably acts as an antimicrobial peptide in the surface mucous layer of planula larvae and likely also in adults. Shows moderate to high activity against some Gram-negative and Gram-positive bacteria (tested on E.coli, B.megaterium, S.aureus, E.aesturaii, B.algicola, Acinetobacter spec.). Does not show antibacterial activity against the coral pathogen V.coralliilyticus. In Acropora millepora (Staghorn coral), this protein is Antimicrobial peptide AmAMP1.